We begin with the raw amino-acid sequence, 376 residues long: Putative F-box protein At1g30930 (376 aa).

The F-box domain maps to 1–44 (MKNSIPIDLIIEIVSRSTAKSVARCHCVSKQWRAIFRRKYFIEL).

This is Putative F-box protein At1g30930 from Arabidopsis thaliana (Mouse-ear cress).